Here is a 744-residue protein sequence, read N- to C-terminus: Tripartite motif-containing protein 2 (744 aa).

Ser10 carries the phosphoserine modification. The segment at 23–64 (CSICLERYKNPKVLPCLHTFCERCLQNYIPAHSLTLSCPVCR) adopts an RING-type zinc-finger fold. A B box-type zinc finger spans residues 113 to 154 (GKPLSCPNHDGNVMDFYCQSCETAMCRECTEGEHAEHPTVPL). Zn(2+)-binding residues include Cys118, His121, Cys141, and His146. Residues 320 to 421 (TTNAVASETV…IRGSPFKLKV (102 aa)) form a Filamin repeat. Residue Thr371 is modified to Phosphothreonine. 3 positions are modified to phosphoserine: Ser375, Ser424, and Ser428. The interval 432–462 (EGVKRRVKSPGSGHVKQKAVKRPASMYSTGK) is disordered. 6 NHL repeats span residues 473 to 516 (IFRV…FSND), 520 to 563 (KSRF…FSSD), 564 to 605 (GKFK…FQPN), 609 to 652 (VTRF…FNQE), 656 to 699 (MLKF…FDGS), and 700 to 743 (GSFL…YRYL).

This sequence belongs to the TRIM/RBCC family. In terms of assembly, forms homooligomers. Interacts with TRIM3; this interaction reduces TRIM2 activity. Interacts with myosin V; myosin V may not be a substrate for ubiquitination. Interacts with NEFL. Interacts with phosphorylated BCL2L11. Interacts with SIRPA. Post-translationally, RING-type zinc finger-dependent and UBE2D1-dependent autoubiquitination.

It is found in the cytoplasm. It carries out the reaction S-ubiquitinyl-[E2 ubiquitin-conjugating enzyme]-L-cysteine + [acceptor protein]-L-lysine = [E2 ubiquitin-conjugating enzyme]-L-cysteine + N(6)-ubiquitinyl-[acceptor protein]-L-lysine.. Its pathway is protein modification; protein ubiquitination. In terms of biological role, UBE2D1-dependent E3 ubiquitin-protein ligase that mediates the ubiquitination of NEFL and of phosphorylated BCL2L11. Plays a neuroprotective function. May play a role in neuronal rapid ischemic tolerance. Plays a role in antiviral immunity and limits New World arenavirus infection independently of its ubiquitin ligase activity. The polypeptide is Tripartite motif-containing protein 2 (TRIM2) (Ailuropoda melanoleuca (Giant panda)).